Here is a 460-residue protein sequence, read N- to C-terminus: Light-independent protochlorophyllide reductase subunit N (460 aa).

[4Fe-4S] cluster-binding residues include cysteine 20, cysteine 45, and cysteine 105.

This sequence belongs to the BchN/ChlN family. In terms of assembly, protochlorophyllide reductase is composed of three subunits; ChlL, ChlN and ChlB. Forms a heterotetramer of two ChlB and two ChlN subunits. [4Fe-4S] cluster serves as cofactor.

It localises to the plastid. It is found in the chloroplast. The catalysed reaction is chlorophyllide a + oxidized 2[4Fe-4S]-[ferredoxin] + 2 ADP + 2 phosphate = protochlorophyllide a + reduced 2[4Fe-4S]-[ferredoxin] + 2 ATP + 2 H2O. Its pathway is porphyrin-containing compound metabolism; chlorophyll biosynthesis (light-independent). Functionally, component of the dark-operative protochlorophyllide reductase (DPOR) that uses Mg-ATP and reduced ferredoxin to reduce ring D of protochlorophyllide (Pchlide) to form chlorophyllide a (Chlide). This reaction is light-independent. The NB-protein (ChlN-ChlB) is the catalytic component of the complex. The chain is Light-independent protochlorophyllide reductase subunit N from Adiantum capillus-veneris (Maidenhair fern).